We begin with the raw amino-acid sequence, 124 residues long: Large ribosomal subunit protein bL12 (124 aa).

It belongs to the bacterial ribosomal protein bL12 family. In terms of assembly, homodimer. Part of the ribosomal stalk of the 50S ribosomal subunit. Forms a multimeric L10(L12)X complex, where L10 forms an elongated spine to which 2 to 4 L12 dimers bind in a sequential fashion. Binds GTP-bound translation factors.

Its function is as follows. Forms part of the ribosomal stalk which helps the ribosome interact with GTP-bound translation factors. Is thus essential for accurate translation. This is Large ribosomal subunit protein bL12 from Pelodictyon phaeoclathratiforme (strain DSM 5477 / BU-1).